The sequence spans 100 residues: NADH-quinone oxidoreductase subunit K (100 aa).

The next 3 membrane-spanning stretches (helical) occupy residues 4-24 (LQHGLILAAILFVLGLTGLII), 28-48 (LLFMLISLEVMINAAALAFVV), and 60-80 (VMYILAITLAAAEASIGLALL).

Belongs to the complex I subunit 4L family. NDH-1 is composed of 13 different subunits. Subunits NuoA, H, J, K, L, M, N constitute the membrane sector of the complex.

The protein localises to the cell inner membrane. The enzyme catalyses a quinone + NADH + 5 H(+)(in) = a quinol + NAD(+) + 4 H(+)(out). Functionally, NDH-1 shuttles electrons from NADH, via FMN and iron-sulfur (Fe-S) centers, to quinones in the respiratory chain. The immediate electron acceptor for the enzyme in this species is believed to be ubiquinone. Couples the redox reaction to proton translocation (for every two electrons transferred, four hydrogen ions are translocated across the cytoplasmic membrane), and thus conserves the redox energy in a proton gradient. This Yersinia enterocolitica serotype O:8 / biotype 1B (strain NCTC 13174 / 8081) protein is NADH-quinone oxidoreductase subunit K.